A 97-amino-acid chain; its full sequence is Co-chaperonin GroES (97 aa).

The protein belongs to the GroES chaperonin family. In terms of assembly, heptamer of 7 subunits arranged in a ring. Interacts with the chaperonin GroEL.

It is found in the cytoplasm. Its function is as follows. Together with the chaperonin GroEL, plays an essential role in assisting protein folding. The GroEL-GroES system forms a nano-cage that allows encapsulation of the non-native substrate proteins and provides a physical environment optimized to promote and accelerate protein folding. GroES binds to the apical surface of the GroEL ring, thereby capping the opening of the GroEL channel. This Sodalis glossinidius (strain morsitans) protein is Co-chaperonin GroES.